A 211-amino-acid polypeptide reads, in one-letter code: MAKPKKENDLDLLIQLADALEAIPGDLSKNFTEVRFLEAELKDVYSQALSSIDDLLNRDTSVERRNLVARNLSLLLKSDDVQTRKKSHIAMYAEAITHSNVLRLEHCYQKMEMKLPNFFIPFTPEVIKEQKTSRPIRASRRRANLRNRRAKELLAAENASEEGDKKQIITDSGKLPETEELTETTNEDLDIKQFSPYSSESSANVSSYNKS.

A disordered region spans residues 155 to 211; the sequence is AAENASEEGDKKQIITDSGKLPETEELTETTNEDLDIKQFSPYSSESSANVSSYNKS. The segment covering 178 to 188 has biased composition (acidic residues); that stretch reads TEELTETTNED. The segment covering 195–211 has biased composition (low complexity); sequence SPYSSESSANVSSYNKS.

This is an uncharacterized protein from Schizosaccharomyces pombe (strain 972 / ATCC 24843) (Fission yeast).